The chain runs to 620 residues: Glutathione-regulated potassium-efflux system protein KefC (620 aa).

Over 1-3 (MDS) the chain is Periplasmic. A helical transmembrane segment spans residues 4–24 (HTLLQALIYLGSAALIVPIAV). A topological domain (cytoplasmic) is located at residue R25. Residues 26 to 46 (LGLGSVLGYLIAGCIIGPWGL) traverse the membrane as a helical segment. Residues 47-53 (RLVTDAE) are Periplasmic-facing. A helical transmembrane segment spans residues 54 to 74 (SILHFAEIGVVLMLFVIGLEL). Residues 75 to 89 (DPQRLWKLRASVFGG) are Cytoplasmic-facing. Residues 90–110 (GALQMVVCGGLIGLFCMFLGL) traverse the membrane as a helical segment. Over 111–113 (RWQ) the chain is Periplasmic. Residues 114 to 134 (VAELIGMTLALSSTAIAMQAM) traverse the membrane as a helical segment. The Cytoplasmic portion of the chain corresponds to 135 to 148 (NERNLTVSQVGRSA). The helical transmembrane segment at 149–169 (FAVLLFQDIAAIPLVAMIPLL) threads the bilayer. Over 170 to 177 (AASGASTT) the chain is Periplasmic. Residues 178 to 198 (LGAFALSALKVAGALALVVLL) form a helical membrane-spanning segment. The Cytoplasmic segment spans residues 199 to 213 (GRYVTRPALRFVARS). A helical membrane pass occupies residues 214–233 (GLREVFSAVALFLVFGFGLL). Residues 234 to 236 (LEE) are Periplasmic-facing. Residues 237-254 (VGLSMAMGAFLAGVLLAS) form a helical membrane-spanning segment. Over 255-269 (SEYRHALESDIEPFK) the chain is Cytoplasmic. A helical transmembrane segment spans residues 270-290 (GLLLGLFFIGVGMSIDFGTLV). Residues 291 to 293 (ENP) lie on the Periplasmic side of the membrane. The helical transmembrane segment at 294–314 (LRILLLLAGFLAIKIVMLWLV) threads the bilayer. Residues 315–326 (ARTLGVPAKQRR) lie on the Cytoplasmic side of the membrane. A helical membrane pass occupies residues 327 to 347 (WFAVLLGQGSEFAFVVFGAAQ). Residues 348-358 (MADVLEPEWAK) are Periplasmic-facing. The helical transmembrane segment at 359–379 (ALTLAVALSMAATPIFLVLLT) threads the bilayer. The Cytoplasmic portion of the chain corresponds to 380–620 (RMEKTATGEA…ADEPEVKPSI (241 aa)). An RCK N-terminal domain is found at 399-518 (QPRVIVAGFG…AGVAMPERET (120 aa)). The tract at residues 599–620 (QGTAEGKHSGKAADEPEVKPSI) is disordered. Residues 603-620 (EGKHSGKAADEPEVKPSI) show a composition bias toward basic and acidic residues.

It belongs to the monovalent cation:proton antiporter 2 (CPA2) transporter (TC 2.A.37) family. KefC subfamily. Homodimer. Interacts with the regulatory subunit KefF.

The protein resides in the cell inner membrane. In terms of biological role, pore-forming subunit of a potassium efflux system that confers protection against electrophiles. Catalyzes K(+)/H(+) antiport. This is Glutathione-regulated potassium-efflux system protein KefC from Salmonella typhi.